The chain runs to 284 residues: Nucleotide-binding protein in ptsO 5'region (284 aa).

8-15 lines the ATP pocket; sequence GRSGSGKS. 60-63 provides a ligand contact to GTP; that stretch reads DARN.

The protein belongs to the RapZ-like family.

Displays ATPase and GTPase activities. The sequence is that of Nucleotide-binding protein in ptsO 5'region from Pseudomonas putida (Arthrobacter siderocapsulatus).